The primary structure comprises 600 residues: Adenine deaminase 2 (600 aa).

This sequence belongs to the metallo-dependent hydrolases superfamily. Adenine deaminase family. Mn(2+) serves as cofactor.

The catalysed reaction is adenine + H2O + H(+) = hypoxanthine + NH4(+). In Bradyrhizobium sp. (strain ORS 278), this protein is Adenine deaminase 2.